The chain runs to 141 residues: Large ribosomal subunit protein uL11 (141 aa).

Belongs to the universal ribosomal protein uL11 family. Part of the ribosomal stalk of the 50S ribosomal subunit. Interacts with L10 and the large rRNA to form the base of the stalk. L10 forms an elongated spine to which L12 dimers bind in a sequential fashion forming a multimeric L10(L12)X complex. One or more lysine residues are methylated.

In terms of biological role, forms part of the ribosomal stalk which helps the ribosome interact with GTP-bound translation factors. This is Large ribosomal subunit protein uL11 from Desulfotalea psychrophila (strain LSv54 / DSM 12343).